We begin with the raw amino-acid sequence, 162 residues long: UPF0262 protein Acry_0160 (162 aa).

The protein belongs to the UPF0262 family.

This is UPF0262 protein Acry_0160 from Acidiphilium cryptum (strain JF-5).